Consider the following 770-residue polypeptide: Rho guanine nucleotide exchange factor 38 (770 aa).

The tract at residues 33–88 (KTDTVVDSSVSGDHSGSLRRSQSDRTEYNQKLQEKMTPQAECSSAETPTPEDEQQV) is disordered. At threonine 34 the chain carries Phosphothreonine. Residues 37–47 (VVDSSVSGDHS) show a composition bias toward low complexity. A compositionally biased stretch (basic and acidic residues) spans 53 to 66 (SQSDRTEYNQKLQE). In terms of domain architecture, DH spans 94 to 285 (KRAKIIRELI…KDINVNINEL (192 aa)). One can recognise a BAR domain in the interval 327 to 542 (LKILTRGESQ…VHSLTFVKEN (216 aa)). 2 consecutive SH3 domains span residues 581–644 (GAEE…PHNP) and 706–769 (VDEQ…KMTY).

Its function is as follows. May act as a guanine-nucleotide releasing factor. This Mus musculus (Mouse) protein is Rho guanine nucleotide exchange factor 38 (Arhgef38).